We begin with the raw amino-acid sequence, 154 residues long: Peptidoglycan amidase Tse1 (154 aa).

Cys-7 and Cys-148 form a disulfide bridge. Residue Cys-30 is the Nucleophile of the active site. His-91 serves as the catalytic Proton acceptor.

As to quaternary structure, forms a heterotetramer with Tsi1 consisting of two Tse1 dimers and two Tsi1 dimers. Formation of the complex inactivates Tse1 enzymatic activity.

The protein localises to the host membrane. It localises to the secreted. The catalysed reaction is Hydrolysis of gamma-D-glutamyl bonds to the L-terminus (position 7) of meso-diaminopimelic acid (meso-A2pm) in 7-(L-Ala-gamma-D-Glu)-meso-A2pm and 7-(L-Ala-gamma-D-Glu)-7-(D-Ala)-meso-A2pm. It is required that the D-terminal amino and carboxy groups of meso-A2pm are unsubstituted.. Toxin secreted by the H1 type VI (H1-T6SS) secretion system into the periplasm of recipient cells. Degrades peptidoglycan via amidase activity thereby helping itself to compete with other bacteria. To protect itself, the bacterium synthesizes immunity protein Tsi1 that specifically interacts with and inactivates cognate toxin. The protein is Peptidoglycan amidase Tse1 of Pseudomonas aeruginosa (strain ATCC 15692 / DSM 22644 / CIP 104116 / JCM 14847 / LMG 12228 / 1C / PRS 101 / PAO1).